The sequence spans 188 residues: Inner membrane-spanning protein YciB (188 aa).

The next 5 helical transmembrane spans lie at 23-43 (FQKATWVLVAASAAALAIGYA), 49-69 (AMLPLFFGGMALVFGTLGLIF), 73-93 (VFVKIKVTVINLALASFLVGG), 116-133 (WRTLTLRYGAYFAFVAII), and 149-169 (FRLALLPVALVFVATQLPFMM).

Belongs to the YciB family.

It localises to the cell inner membrane. Plays a role in cell envelope biogenesis, maintenance of cell envelope integrity and membrane homeostasis. This is Inner membrane-spanning protein YciB from Caulobacter vibrioides (strain ATCC 19089 / CIP 103742 / CB 15) (Caulobacter crescentus).